The primary structure comprises 69 residues: MKNLLICIIKMYRKYISPLKRPSCRFYPTCSQYSIEAIEKYGALKGTLISIKRILKCHPFNEGGYDPVK.

Belongs to the UPF0161 family.

The protein resides in the cell membrane. Its function is as follows. Could be involved in insertion of integral membrane proteins into the membrane. The protein is Putative membrane protein insertion efficiency factor of Clostridium botulinum (strain ATCC 19397 / Type A).